An 86-amino-acid chain; its full sequence is Large ribosomal subunit protein bL31B (86 aa).

The protein belongs to the bacterial ribosomal protein bL31 family. Type B subfamily. As to quaternary structure, part of the 50S ribosomal subunit.

In Streptococcus agalactiae serotype Ia (strain ATCC 27591 / A909 / CDC SS700), this protein is Large ribosomal subunit protein bL31B.